Consider the following 1072-residue polypeptide: MGHVEGNLQLVNAISGRSIGTHVQYFMTMEDLKRFVIQQWHIPGPEIFILQPYGGKFKRGHFQDMVSEAKKAVARGRVRETSVLYVFDRRLFDGGEEALAQATRHDSTTLVRPLVSPLEDAEAEVGERAAASLLTTNLGWLSALEIDVRYFHACIEGWVQQLANMKECLSVLLQYLELYSFDIEKLYHASAEAVDGVRQRCASNDWRQKNQELLETIDAVASRGKLVQFVDLEEMSEAEERLRELERLLSKKLSLFRGALDENHAIRQEIANHIKEVGTRYQDNISNYELEAQILGNFKDMVKKVKEDTRTILDLDTTKVSPDLMTSAVSLFKEMKSTAIPALYTVGLSLFTQASKCMETKASLQREMLVILADIAVAQVNIVDAKNSLLQQVNQDISALHTTEQQLLRVSELPVVYGLYLIELYRRQHWITGLDRYYSEHTKEIQSVLQRELVFREKWSSDFSSYSEIFQWQDDKPQLAKLFSNASPLEVGRPCIDIGTIQTYIEMLARCDVAEDSQTLLKKTLSEVSRFQFIVKSPLAGSVSKDSTDSMNEVIEGYKNRINKLELLLHSTQFSNTSSWPTGVLNSNSLNVFHNNIASINEKLLLSDYKSRDSIMSGKSNEKELQSQLVELQKQLEEAKNEAKRVQQQLKTTKTQLLNGEDERTAYKETLSILNAELSKLILNQEEQKQELVIAAKDFQEKLDVSMRQVNDLLKQVNFWKSKCGDLDKIKQDLLANMATKETDFNNRCTDYERNIVELQRQLSEKCDATNERSVTSTSADVPGETKEYIESLKEVNRRLEEDMFAVFAGNIVLLENIGLLLSRGPDNKLQIIRVKGLRKNIDDSIIKDSSPVINSHMVKSTVFQDVKNLFDELQLSQGVNDQLHFVSELERFYEEDLFQTSVIKRFTDVENLAKKLRKENKAKKSVIERHNKDKITFRDLKVGDLALFLPTRGVAGSLTSSVASSLASSFSSVDLSTPPPPLPTASQSLIKVTPHKPHRNKSTPWAVFTASELGVRYFLKDSEELVKGKDWFVGKIQSMEKYTVNGDSRNPFKLPEGMVWYEVVASCTKEL.

Residues 615–804 are a coiled coil; the sequence is IMSGKSNEKE…EVNRRLEEDM (190 aa).

The protein belongs to the ATG11 family. Homodimer.

The protein localises to the preautophagosomal structure membrane. It localises to the vacuole membrane. Functionally, involved in cytoplasm to vacuole transport (Cvt), pexophagy, mitophagy and nucleophagy. Recruits mitochondria for their selective degradation via autophagy (mitophagy) during starvation. Works as scaffold proteins that recruit ATG proteins to the pre-autophagosome (PAS), the site of vesicle/autophagosome formation. Required for the Cvt vesicles completion. The chain is Autophagy-related protein 11 (ATG11) from Eremothecium gossypii (strain ATCC 10895 / CBS 109.51 / FGSC 9923 / NRRL Y-1056) (Yeast).